A 355-amino-acid chain; its full sequence is Protein pelota homolog (355 aa).

The protein belongs to the eukaryotic release factor 1 family. Pelota subfamily. Monomer. Requires a divalent metal cation as cofactor.

It is found in the cytoplasm. In terms of biological role, may function in recognizing stalled ribosomes, interact with stem-loop structures in stalled mRNA molecules, and effect endonucleolytic cleavage of the mRNA. May play a role in the release non-functional ribosomes and degradation of damaged mRNAs. Has endoribonuclease activity. The chain is Protein pelota homolog from Haloarcula marismortui (strain ATCC 43049 / DSM 3752 / JCM 8966 / VKM B-1809) (Halobacterium marismortui).